A 396-amino-acid polypeptide reads, in one-letter code: 1-deoxy-D-xylulose 5-phosphate reductoisomerase (396 aa).

Positions 10, 11, 12, 13, 36, 37, 38, and 124 each coordinate NADPH. Lysine 125 contacts 1-deoxy-D-xylulose 5-phosphate. Glutamate 126 contacts NADPH. Residue aspartate 150 participates in Mn(2+) binding. 1-deoxy-D-xylulose 5-phosphate-binding residues include serine 151, glutamate 152, serine 186, and histidine 209. Position 152 (glutamate 152) interacts with Mn(2+). Glycine 215 lines the NADPH pocket. Residues serine 222, asparagine 227, lysine 228, and glutamate 231 each coordinate 1-deoxy-D-xylulose 5-phosphate. Residue glutamate 231 coordinates Mn(2+).

It belongs to the DXR family. Requires Mg(2+) as cofactor. The cofactor is Mn(2+).

The enzyme catalyses 2-C-methyl-D-erythritol 4-phosphate + NADP(+) = 1-deoxy-D-xylulose 5-phosphate + NADPH + H(+). The protein operates within isoprenoid biosynthesis; isopentenyl diphosphate biosynthesis via DXP pathway; isopentenyl diphosphate from 1-deoxy-D-xylulose 5-phosphate: step 1/6. Its function is as follows. Catalyzes the NADPH-dependent rearrangement and reduction of 1-deoxy-D-xylulose-5-phosphate (DXP) to 2-C-methyl-D-erythritol 4-phosphate (MEP). This chain is 1-deoxy-D-xylulose 5-phosphate reductoisomerase, found in Actinobacillus pleuropneumoniae serotype 3 (strain JL03).